The sequence spans 372 residues: Heat-inducible transcription repressor HrcA (372 aa).

Residues 296–331 (VSSGYGRSGEAGEPAGNDPVGEPETESETESQTNDM) form a disordered region.

The protein belongs to the HrcA family.

Functionally, negative regulator of class I heat shock genes (grpE-dnaK-dnaJ and groELS operons). Prevents heat-shock induction of these operons. The sequence is that of Heat-inducible transcription repressor HrcA from Bifidobacterium longum subsp. infantis (strain ATCC 15697 / DSM 20088 / JCM 1222 / NCTC 11817 / S12).